The primary structure comprises 441 residues: MQKVAIVGRPNVGKSSLFNRLVGRREAVVADFPGVTRDAKEGLMLYHNHRIVLVDTGGLWSGDEWEQAIREKAEWAMEGAQAVIFVVDPREGLTAADYEVADWLRRLGKPVIVAANKIDSPKHDVYLAELWGLGFGDPVAISAEHARGLDDLMERVMAHLPADEEDVPEVAPIRISLIGRPNVGKSSLLNAITQSERAIVADQPGTTRDSLDVEWNYGGQRFVLVDTAGIRKKPDTAIEEYAIQRSEAAIERSDIIWLVVNATEIGDHELKLANLAYDSGKPVIVVVNKWDLVPDEALKQTEKELNQKLHHIAYAPRVYTSAINDYGIHDMLAEAMKLYEKWQSRIPTAELNRWLEIWQMRQAVPNFHGKPLKMYFMTQVETAPPTFAIFCNRADFVTRAYEGFLQNRIREDLGLAGIPVRLKWKEKGPYKKGKKGEEAEA.

2 consecutive EngA-type G domains span residues 2-164 and 173-343; these read QKVA…PADE and IRIS…EKWQ. GTP-binding positions include 8–15, 55–59, 116–119, 179–186, 226–230, and 288–291; these read GRPNVGKS, DTGGL, NKID, DTAGI, and NKWD. One can recognise a KH-like domain in the interval 344 to 428; the sequence is SRIPTAELNR…PVRLKWKEKG (85 aa).

It belongs to the TRAFAC class TrmE-Era-EngA-EngB-Septin-like GTPase superfamily. EngA (Der) GTPase family. As to quaternary structure, associates with the 50S ribosomal subunit.

In terms of biological role, GTPase that plays an essential role in the late steps of ribosome biogenesis. In Deinococcus geothermalis (strain DSM 11300 / CIP 105573 / AG-3a), this protein is GTPase Der.